We begin with the raw amino-acid sequence, 231 residues long: Lactate utilization protein C (231 aa).

The protein belongs to the LutC/YkgG family.

Functionally, is involved in L-lactate degradation and allows cells to grow with lactate as the sole carbon source. This chain is Lactate utilization protein C, found in Macrococcus caseolyticus (strain JCSC5402) (Macrococcoides caseolyticum).